We begin with the raw amino-acid sequence, 251 residues long: MSLAKRIIPCLDINGGRVVKGVNFIGLQDAGDPVEIARRYNDEGADEIVLLDITASYEQRGIMIEVVKNIAKEVFIPFSVGGGIRSLEDMSALLNAGCDKISINSAAIRNPQLIDESAKRFGSQCIVVAVDVKKVSQNSWNVYINGGRVDSGKDMLEWINEACARGAGEILLTSIDTDGTKGGYDKAMIEAVKSINVPIIASGGAGSMEDFADVFVHGADAALAASVFHYKEIEIKMLKTYLQDKGVPVRI.

Catalysis depends on residues Asp12 and Asp131.

This sequence belongs to the HisA/HisF family. As to quaternary structure, heterodimer of HisH and HisF.

It is found in the cytoplasm. It carries out the reaction 5-[(5-phospho-1-deoxy-D-ribulos-1-ylimino)methylamino]-1-(5-phospho-beta-D-ribosyl)imidazole-4-carboxamide + L-glutamine = D-erythro-1-(imidazol-4-yl)glycerol 3-phosphate + 5-amino-1-(5-phospho-beta-D-ribosyl)imidazole-4-carboxamide + L-glutamate + H(+). The protein operates within amino-acid biosynthesis; L-histidine biosynthesis; L-histidine from 5-phospho-alpha-D-ribose 1-diphosphate: step 5/9. Its function is as follows. IGPS catalyzes the conversion of PRFAR and glutamine to IGP, AICAR and glutamate. The HisF subunit catalyzes the cyclization activity that produces IGP and AICAR from PRFAR using the ammonia provided by the HisH subunit. This Helicobacter hepaticus (strain ATCC 51449 / 3B1) protein is Imidazole glycerol phosphate synthase subunit HisF.